The sequence spans 234 residues: Small ribosomal subunit protein uS2 (234 aa).

The protein belongs to the universal ribosomal protein uS2 family.

This Prochlorococcus marinus subsp. pastoris (strain CCMP1986 / NIES-2087 / MED4) protein is Small ribosomal subunit protein uS2.